The sequence spans 114 residues: Histone H3-6 (114 aa).

A compositionally biased stretch (basic residues) spans 1-17 (NTGGKAPRKHIAHKQAK). The interval 1 to 32 (NTGGKAPRKHIAHKQAKKSSAAAATGGVKKPH) is disordered. Residues 18 to 28 (KSSAAAATGGV) are compositionally biased toward low complexity.

The protein belongs to the histone H3 family. The nucleosome is a histone octamer containing two molecules each of H2A, H2B, H3 and H4 assembled in one H3-H4 heterotetramer and two H2A-H2B heterodimers. The octamer wraps approximately 147 bp of DNA.

It localises to the nucleus. The protein resides in the chromosome. Functionally, core component of nucleosome. Nucleosomes wrap and compact DNA into chromatin, limiting DNA accessibility to the cellular machineries which require DNA as a template. Histones thereby play a central role in transcription regulation, DNA repair, DNA replication and chromosomal stability. DNA accessibility is regulated via a complex set of post-translational modifications of histones, also called histone code, and nucleosome remodeling. In Stylonychia lemnae (Ciliate), this protein is Histone H3-6 (H3-6).